Here is a 317-residue protein sequence, read N- to C-terminus: Protein phosphatase 1 regulatory subunit 3C-B (317 aa).

In terms of domain architecture, CBM21 spans 150-258; that stretch reads RNRLKKNLVC…NNDGKNYKLV (109 aa).

In terms of assembly, interacts with PPP1CC catalytic subunit of PP1 and associates with glycogen. Forms complexes with glycogen phosphorylase, glycogen synthase and phosphorylase kinase which is necessary for its regulation of PP1 activity.

In terms of biological role, acts as a glycogen-targeting subunit for PP1 and regulates its activity. Activates glycogen synthase, reduces glycogen phosphorylase activity and limits glycogen breakdown. This chain is Protein phosphatase 1 regulatory subunit 3C-B (ppp1r3cb), found in Danio rerio (Zebrafish).